The following is a 241-amino-acid chain: Methylthioribulose-1-phosphate dehydratase (241 aa).

A substrate-binding site is contributed by Cys-96. Positions 114 and 116 each coordinate Zn(2+). Glu-138 functions as the Proton donor/acceptor in the catalytic mechanism. His-194 is a binding site for Zn(2+).

It belongs to the aldolase class II family. MtnB subfamily. Zn(2+) serves as cofactor.

It localises to the cytoplasm. It carries out the reaction 5-(methylsulfanyl)-D-ribulose 1-phosphate = 5-methylsulfanyl-2,3-dioxopentyl phosphate + H2O. It functions in the pathway amino-acid biosynthesis; L-methionine biosynthesis via salvage pathway; L-methionine from S-methyl-5-thio-alpha-D-ribose 1-phosphate: step 2/6. Functionally, catalyzes the dehydration of methylthioribulose-1-phosphate (MTRu-1-P) into 2,3-diketo-5-methylthiopentyl-1-phosphate (DK-MTP-1-P). Functions in the methionine salvage pathway. May play a role in apoptosis. The protein is Methylthioribulose-1-phosphate dehydratase of Danio rerio (Zebrafish).